The chain runs to 354 residues: 3-isopropylmalate dehydrogenase (354 aa).

Residue 76–87 participates in NAD(+) binding; the sequence is GPRWDGAKERPE. The substrate site is built by Arg-94, Arg-104, Arg-130, and Asp-215. Positions 215, 239, and 243 each coordinate Mg(2+). NAD(+) is bound at residue 273–285; sequence GSAPDIAGKNKAN.

This sequence belongs to the isocitrate and isopropylmalate dehydrogenases family. LeuB type 1 subfamily. In terms of assembly, homodimer. Mg(2+) is required as a cofactor. The cofactor is Mn(2+).

It localises to the cytoplasm. It catalyses the reaction (2R,3S)-3-isopropylmalate + NAD(+) = 4-methyl-2-oxopentanoate + CO2 + NADH. Its pathway is amino-acid biosynthesis; L-leucine biosynthesis; L-leucine from 3-methyl-2-oxobutanoate: step 3/4. Functionally, catalyzes the oxidation of 3-carboxy-2-hydroxy-4-methylpentanoate (3-isopropylmalate) to 3-carboxy-4-methyl-2-oxopentanoate. The product decarboxylates to 4-methyl-2 oxopentanoate. In Bacillus anthracis, this protein is 3-isopropylmalate dehydrogenase.